The sequence spans 97 residues: MNLMDFFRRNKEPTATTAKDRLQIVLAHERADRNAPDFLPALQKELLAVIKKYVPIDDDKVAVKLERESGCSMLEVNVELPAPTKGAPRQPAATAAG.

It belongs to the MinE family.

Prevents the cell division inhibition by proteins MinC and MinD at internal division sites while permitting inhibition at polar sites. This ensures cell division at the proper site by restricting the formation of a division septum at the midpoint of the long axis of the cell. This Rhodospirillum centenum (strain ATCC 51521 / SW) protein is Cell division topological specificity factor.